A 56-amino-acid polypeptide reads, in one-letter code: Small ribosomal subunit protein uS14 (56 aa).

Zn(2+) contacts are provided by Cys21, Cys24, Cys39, and Cys42.

Belongs to the universal ribosomal protein uS14 family. Zinc-binding uS14 subfamily. As to quaternary structure, part of the 30S ribosomal subunit. Zn(2+) serves as cofactor.

In terms of biological role, binds 16S rRNA, required for the assembly of 30S particles. The protein is Small ribosomal subunit protein uS14 of Thermococcus kodakarensis (strain ATCC BAA-918 / JCM 12380 / KOD1) (Pyrococcus kodakaraensis (strain KOD1)).